A 655-amino-acid chain; its full sequence is Very long-chain specific acyl-CoA dehydrogenase, mitochondrial (655 aa).

The N-terminal 40 residues, 1 to 40 (MRAARMAQSTGRQLLRLRGVSSWPGELLGQPRPGPARRPY), are a transit peptide targeting the mitochondrion. The interval 22-66 (SWPGELLGQPRPGPARRPYASGVAQAAVDQSDSQPSEASTREKRA) is disordered. A catalytic region spans residues 41-482 (ASGVAQAAVD…ALQGCMDKGK (442 aa)). The segment covering 49 to 59 (VDQSDSQPSEA) has biased composition (polar residues). Lysine 71 carries the N6-acetyllysine; alternate modification. The residue at position 71 (lysine 71) is an N6-succinyllysine; alternate. Lysine 195 carries the post-translational modification N6-succinyllysine. 214-223 (FCLTEPSSGS) provides a ligand contact to FAD. At cysteine 237 the chain carries S-nitrosocysteine. Lysine 239 is subject to N6-acetyllysine; alternate. Lysine 239 carries the post-translational modification N6-succinyllysine; alternate. Residue 249–251 (WIS) coordinates FAD. Residues lysine 276 and lysine 278 each carry the N6-acetyllysine; alternate modification. An N6-succinyllysine; alternate mark is found at lysine 276 and lysine 278. At lysine 298 the chain carries N6-acetyllysine. At lysine 331 the chain carries N6-acetyllysine; alternate. Lysine 331 bears the N6-succinyllysine; alternate mark. N6-succinyllysine is present on lysine 372. 461-463 (FEG) contributes to the substrate binding site. The active-site Proton acceptor is glutamate 462. Residue 464-466 (TND) coordinates FAD. Lysine 482 is subject to N6-acetyllysine; alternate. The residue at position 482 (lysine 482) is an N6-succinyllysine; alternate. A membrane-anchoring region spans residues 483–516 (ELSGLGNALKNPFGNAGLLLGEAGKQLRRRAGLG). Serine 517 and serine 522 each carry phosphoserine. N6-acetyllysine is present on lysine 550. The residue at position 556 (lysine 556) is an N6-acetyllysine; alternate. At lysine 556 the chain carries N6-succinyllysine; alternate. Glutamine 562 contacts FAD. Position 639 is an N6-succinyllysine (lysine 639).

Belongs to the acyl-CoA dehydrogenase family. In terms of assembly, homodimer. Homodimerizes after import into the mitochondrion. The cofactor is FAD. In terms of processing, S-nitrosylation at Cys-237 in liver improves catalytic efficiency.

It is found in the mitochondrion inner membrane. The enzyme catalyses a very-long-chain 2,3-saturated fatty acyl-CoA + oxidized [electron-transfer flavoprotein] + H(+) = a very-long-chain (2E)-enoyl-CoA + reduced [electron-transfer flavoprotein]. The catalysed reaction is dodecanoyl-CoA + oxidized [electron-transfer flavoprotein] + H(+) = (2E)-dodecenoyl-CoA + reduced [electron-transfer flavoprotein]. It carries out the reaction tetradecanoyl-CoA + oxidized [electron-transfer flavoprotein] + H(+) = (2E)-tetradecenoyl-CoA + reduced [electron-transfer flavoprotein]. It catalyses the reaction oxidized [electron-transfer flavoprotein] + hexadecanoyl-CoA + H(+) = (2E)-hexadecenoyl-CoA + reduced [electron-transfer flavoprotein]. The enzyme catalyses octadecanoyl-CoA + oxidized [electron-transfer flavoprotein] + H(+) = (2E)-octadecenoyl-CoA + reduced [electron-transfer flavoprotein]. The catalysed reaction is eicosanoyl-CoA + oxidized [electron-transfer flavoprotein] + H(+) = (2E)-eicosenoyl-CoA + reduced [electron-transfer flavoprotein]. It carries out the reaction docosanoyl-CoA + oxidized [electron-transfer flavoprotein] + H(+) = (2E)-docosenoyl-CoA + reduced [electron-transfer flavoprotein]. It catalyses the reaction tetracosanoyl-CoA + oxidized [electron-transfer flavoprotein] + H(+) = (2E)-tetracosenoyl-CoA + reduced [electron-transfer flavoprotein]. Its pathway is lipid metabolism; mitochondrial fatty acid beta-oxidation. In terms of biological role, very long-chain specific acyl-CoA dehydrogenase is one of the acyl-CoA dehydrogenases that catalyze the first step of mitochondrial fatty acid beta-oxidation, an aerobic process breaking down fatty acids into acetyl-CoA and allowing the production of energy from fats. The first step of fatty acid beta-oxidation consists in the removal of one hydrogen from C-2 and C-3 of the straight-chain fatty acyl-CoA thioester, resulting in the formation of trans-2-enoyl-CoA. Among the different mitochondrial acyl-CoA dehydrogenases, very long-chain specific acyl-CoA dehydrogenase acts specifically on acyl-CoAs with saturated 12 to 24 carbons long primary chains. The chain is Very long-chain specific acyl-CoA dehydrogenase, mitochondrial from Bos taurus (Bovine).